The primary structure comprises 358 residues: Protein-glutamate methylesterase/protein-glutamine glutaminase (358 aa).

In terms of domain architecture, Response regulatory spans 5–122 (SVLIIDDSAL…RNSLEAYTDE (118 aa)). Residue Asp56 is modified to 4-aspartylphosphate. Positions 159–351 (GISTEKLIII…RRILARLVGA (193 aa)) constitute a CheB-type methylesterase domain. Active-site residues include Ser171, His197, and Asp293.

This sequence belongs to the CheB family. In terms of processing, phosphorylated by CheA. Phosphorylation of the N-terminal regulatory domain activates the methylesterase activity.

It localises to the cytoplasm. The enzyme catalyses [protein]-L-glutamate 5-O-methyl ester + H2O = L-glutamyl-[protein] + methanol + H(+). The catalysed reaction is L-glutaminyl-[protein] + H2O = L-glutamyl-[protein] + NH4(+). In terms of biological role, involved in chemotaxis. Part of a chemotaxis signal transduction system that modulates chemotaxis in response to various stimuli. Catalyzes the demethylation of specific methylglutamate residues introduced into the chemoreceptors (methyl-accepting chemotaxis proteins or MCP) by CheR. Also mediates the irreversible deamidation of specific glutamine residues to glutamic acid. This Nitrosomonas europaea (strain ATCC 19718 / CIP 103999 / KCTC 2705 / NBRC 14298) protein is Protein-glutamate methylesterase/protein-glutamine glutaminase.